The sequence spans 1036 residues: Multiple C2 domain and transmembrane region protein 2 (1036 aa).

Positions 1–110 constitute a C2 1 domain; that stretch reads MRNTTKLVVH…YKDDQVYQRF (110 aa). Disordered regions lie at residues 137-204 and 225-246; these read DQTF…PVQK and RENP…HPQN. Residues 146–155 are compositionally biased toward polar residues; it reads PYTSPTQASA. Acidic residues predominate over residues 158 to 168; that stretch reads TEEDTADSETE. Basic and acidic residues predominate over residues 190–204; it reads VEGKKSEEVKEPVQK. C2 domains are found at residues 277–399, 440–563, and 607–734; these read PNAG…PQWY, VHGE…SRWF, and YISD…THSF. Residues Asp316, Asp364, Glu366, and Asp372 each contribute to the Ca(2+) site. 2 consecutive transmembrane segments (helical) span residues 871 to 891 and 979 to 999; these read FILV…MFFI and LFIL…FKAI.

This sequence belongs to the MCTP family. Ca(2+) is required as a cofactor. As to expression, expressed in the vascular tissues of roots and rosette leaves. Accumulates in roots meristems. Observed in flowers.

It is found in the cell membrane. Functionally, may function as a signaling molecule by regulating the trafficking of other regulators. The sequence is that of Multiple C2 domain and transmembrane region protein 2 from Arabidopsis thaliana (Mouse-ear cress).